The primary structure comprises 120 residues: Seripauperin-2 (120 aa).

A helical membrane pass occupies residues 7-24 (IAAGVAAIAATASATTTL).

Belongs to the SRP1/TIP1 family. Seripauperin subfamily.

It localises to the membrane. This chain is Seripauperin-2 (PAU2), found in Saccharomyces cerevisiae (strain ATCC 204508 / S288c) (Baker's yeast).